The primary structure comprises 429 residues: Histidine--tRNA ligase (429 aa).

The protein belongs to the class-II aminoacyl-tRNA synthetase family. In terms of assembly, homodimer.

The protein resides in the cytoplasm. It catalyses the reaction tRNA(His) + L-histidine + ATP = L-histidyl-tRNA(His) + AMP + diphosphate + H(+). The chain is Histidine--tRNA ligase from Escherichia fergusonii (strain ATCC 35469 / DSM 13698 / CCUG 18766 / IAM 14443 / JCM 21226 / LMG 7866 / NBRC 102419 / NCTC 12128 / CDC 0568-73).